The following is an 82-amino-acid chain: uncharacterized protein (82 aa).

A run of 2 helical transmembrane segments spans residues 8-28 and 50-70; these read LLSA…LPAP and LYTV…YLVL.

The protein resides in the cell membrane. This is an uncharacterized protein from Klebsiella pneumoniae.